Reading from the N-terminus, the 215-residue chain is tRNA (guanine-N(7)-)-methyltransferase (215 aa).

S-adenosyl-L-methionine-binding residues include Glu44, Glu69, Asp96, and Asp118. The active site involves Asp118. Substrate-binding positions include Lys122, Asp154, and 192 to 195 (TEYE).

Belongs to the class I-like SAM-binding methyltransferase superfamily. TrmB family.

It carries out the reaction guanosine(46) in tRNA + S-adenosyl-L-methionine = N(7)-methylguanosine(46) in tRNA + S-adenosyl-L-homocysteine. The protein operates within tRNA modification; N(7)-methylguanine-tRNA biosynthesis. Functionally, catalyzes the formation of N(7)-methylguanine at position 46 (m7G46) in tRNA. The polypeptide is tRNA (guanine-N(7)-)-methyltransferase (Levilactobacillus brevis (strain ATCC 367 / BCRC 12310 / CIP 105137 / JCM 1170 / LMG 11437 / NCIMB 947 / NCTC 947) (Lactobacillus brevis)).